The following is a 161-amino-acid chain: Type II secretion system protein M (161 aa).

Residues 1 to 16 (MNELRRRWQVMSQRER) lie on the Cytoplasmic side of the membrane. A helical membrane pass occupies residues 17–37 (LMALACGGLVVLCLLYYLIWA). At 38 to 161 (PWQESVRQWQ…VTRLSLERVL (124 aa)) the chain is on the periplasmic side.

The protein belongs to the GSP M family. Type II secretion system is composed of four main components: the outer membrane complex, the inner membrane complex, the cytoplasmic secretion ATPase and the periplasm-spanning pseudopilus. Forms homodimers. Interacts with OutL/GspL. Interacts with OutE/GspE and OutF/GspF.

It localises to the cell inner membrane. Functionally, inner membrane component of the type II secretion system required for the energy-dependent secretion of extracellular factors such as proteases and toxins from the periplasm. Plays a role in the complex assembly and recruits OutL resulting in a stable complex in the inner membrane. Provides thus a link between the energy-providing OutE protein in the cytoplasm and the rest of the T2SS machinery. The chain is Type II secretion system protein M (outM) from Dickeya chrysanthemi (Pectobacterium chrysanthemi).